We begin with the raw amino-acid sequence, 480 residues long: Glutamate--tRNA ligase (480 aa).

The short motif at 21-31 (PSPTGYLHVGG) is the 'HIGH' region element. Cys-110, Cys-112, Cys-137, and His-139 together coordinate Zn(2+). Residues 248 to 252 (KLSKR) carry the 'KMSKS' region motif. Lys-251 provides a ligand contact to ATP.

It belongs to the class-I aminoacyl-tRNA synthetase family. Glutamate--tRNA ligase type 1 subfamily. Monomer. It depends on Zn(2+) as a cofactor.

Its subcellular location is the cytoplasm. It carries out the reaction tRNA(Glu) + L-glutamate + ATP = L-glutamyl-tRNA(Glu) + AMP + diphosphate. In terms of biological role, catalyzes the attachment of glutamate to tRNA(Glu) in a two-step reaction: glutamate is first activated by ATP to form Glu-AMP and then transferred to the acceptor end of tRNA(Glu). This Histophilus somni (strain 2336) (Haemophilus somnus) protein is Glutamate--tRNA ligase.